We begin with the raw amino-acid sequence, 630 residues long: Putative F-box/LRR-repeat protein At3g49150 (630 aa).

In terms of domain architecture, F-box spans 15–63 (KDIISDLPEALICHILSFLPIEDSALTSVLSKKWQHLFAFRPNLEFDDA). 9 LRR repeats span residues 101–129 (CRDF…DLRC), 152–178 (RIET…YLNK), 180–205 (LLRH…FIMN), 228–253 (CEDV…VYHD), 300–325 (ISNV…QIPV), 337–362 (DQKA…IFDG), 406–436 (CDDY…KLFY), 437–465 (DTQI…FNAR), and 567–590 (DSSI…GLNW).

This chain is Putative F-box/LRR-repeat protein At3g49150, found in Arabidopsis thaliana (Mouse-ear cress).